Here is a 310-residue protein sequence, read N- to C-terminus: Probable cell division protein WhiA (310 aa).

A DNA-binding region (H-T-H motif) is located at residues 277-310; that stretch reads SLKELAEQVPDGPISKSGVNHRLKKLHEIAENLR.

The protein belongs to the WhiA family.

Involved in cell division and chromosome segregation. The sequence is that of Probable cell division protein WhiA from Lactobacillus delbrueckii subsp. bulgaricus (strain ATCC 11842 / DSM 20081 / BCRC 10696 / JCM 1002 / NBRC 13953 / NCIMB 11778 / NCTC 12712 / WDCM 00102 / Lb 14).